The sequence spans 358 residues: C-X-C chemokine receptor type 4 (358 aa).

Positions 1–25 (MDGFSGGIDINIFDSNSTENGSGDF) are important for chemokine binding and signaling. Topologically, residues 1 to 44 (MDGFSGGIDINIFDSNSTENGSGDFEDFSEPCFMHDNSDFNRIF) are extracellular. Asparagine 16 and asparagine 20 each carry an N-linked (GlcNAc...) asparagine glycan. 2 disulfide bridges follow: cysteine 32-cysteine 281 and cysteine 113-cysteine 190. Residues 45–67 (LPTIYSFIFLLGIIGNGLVVVVM) form a helical membrane-spanning segment. At 68–81 (GYQKKSRTMTDKYR) the chain is on the cytoplasmic side. Residues 82–103 (LHLSVADLLFVFTLPFWSVDAA) form a helical membrane-spanning segment. Residues 98-101 (WSVD) are chemokine binding. The Extracellular segment spans residues 104–114 (IGWYFKEFLCK). Residues 115 to 134 (AVHVIYTVNLYSSVLILAFI) form a helical membrane-spanning segment. A chemokine binding region spans residues 117 to 121 (HVIYT). Topologically, residues 135–158 (SLDRYLAIVHATNSQGSRKMLADK) are cytoplasmic. An involved in dimerization; when bound to chemokine region spans residues 139–151 (YLAIVHATNSQGS). A helical transmembrane segment spans residues 159-178 (VVYAGVWLPALLLTVPDLVF). The Extracellular portion of the chain corresponds to 179 to 202 (ARVSDENGQFVCDRIYPIDNRETW). Positions 190–194 (CDRIY) are chemokine binding, important for signaling. The chain crosses the membrane as a helical span at residues 203–223 (TVGFRFLHITVGLILPGLIIL). The Cytoplasmic segment spans residues 224–248 (ICYCVIISKLSHSKGHQKRKALKTT). A helical transmembrane segment spans residues 249–268 (VILILAFFACWLPYYVCLTT). At 269-289 (DTFMLLGLLKADCIWENTLHK) the chain is on the extracellular side. Residues 290–309 (AISITEALAFFHCCLNPILY) form a helical membrane-spanning segment. The Cytoplasmic segment spans residues 310-358 (AFLGAKFKTSAQNAFTSVSRGSSLKILSKKRAGLSSVSTESESSSFHSS). Residues 338–358 (KKRAGLSSVSTESESSSFHSS) form a disordered region. A compositionally biased stretch (low complexity) spans 344 to 358 (SSVSTESESSSFHSS).

It belongs to the G-protein coupled receptor 1 family. As to quaternary structure, monomer. Can form dimers. Post-translationally, sulfation is required for efficient binding of cxcl12/sdf-1alpha and promotes its dimerization. O- and N-glycosylated.

The protein localises to the cell membrane. It is found in the cytoplasm. It localises to the nucleus. Its subcellular location is the early endosome. The protein resides in the late endosome. The protein localises to the lysosome. In terms of biological role, receptor for the C-X-C chemokine cxcl12/sdf-1. Transduces a signal by increasing the intracellular calcium ion level. Signaling with cxcl12/sdf-1 mediates the directional movement of mesodermal cells during gastrulation. May play a role in the migration of embryonic presumptive primordial germ cells (pPGCs). May also be involved in regulating migration of hematopoietic stem cells into the larval liver. The sequence is that of C-X-C chemokine receptor type 4 from Xenopus tropicalis (Western clawed frog).